The primary structure comprises 53 residues: UPF0391 membrane protein YPDSF_3201 (53 aa).

2 consecutive transmembrane segments (helical) span residues 4–24 (WGII…GGLA) and 27–47 (AAWA…ISLF).

It belongs to the UPF0391 family.

It localises to the cell membrane. The protein is UPF0391 membrane protein YPDSF_3201 of Yersinia pestis (strain Pestoides F).